Here is a 623-residue protein sequence, read N- to C-terminus: tRNA 5-methylaminomethyl-2-thiouridine biosynthesis bifunctional protein MnmC (623 aa).

The tRNA (mnm(5)s(2)U34)-methyltransferase stretch occupies residues 1–244 (MCVSSSIQTA…KREMLKAIWP (244 aa)). The FAD-dependent cmnm(5)s(2)U34 oxidoreductase stretch occupies residues 268 to 623 (IGAGIAGLHC…VKIKKPYYSS (356 aa)).

This sequence in the N-terminal section; belongs to the methyltransferase superfamily. tRNA (mnm(5)s(2)U34)-methyltransferase family. In the C-terminal section; belongs to the DAO family. FAD is required as a cofactor.

The protein resides in the cytoplasm. It catalyses the reaction 5-aminomethyl-2-thiouridine(34) in tRNA + S-adenosyl-L-methionine = 5-methylaminomethyl-2-thiouridine(34) in tRNA + S-adenosyl-L-homocysteine + H(+). In terms of biological role, catalyzes the last two steps in the biosynthesis of 5-methylaminomethyl-2-thiouridine (mnm(5)s(2)U) at the wobble position (U34) in tRNA. Catalyzes the FAD-dependent demodification of cmnm(5)s(2)U34 to nm(5)s(2)U34, followed by the transfer of a methyl group from S-adenosyl-L-methionine to nm(5)s(2)U34, to form mnm(5)s(2)U34. The protein is tRNA 5-methylaminomethyl-2-thiouridine biosynthesis bifunctional protein MnmC of Acinetobacter baylyi (strain ATCC 33305 / BD413 / ADP1).